A 169-amino-acid polypeptide reads, in one-letter code: Putative pre-16S rRNA nuclease (169 aa).

Basic and acidic residues predominate over residues 1-19 (MTDSDHRLPDRPGEGDPGR). A disordered region spans residues 1-22 (MTDSDHRLPDRPGEGDPGRGRR).

It belongs to the YqgF nuclease family.

It is found in the cytoplasm. In terms of biological role, could be a nuclease involved in processing of the 5'-end of pre-16S rRNA. This chain is Putative pre-16S rRNA nuclease, found in Mycobacterium sp. (strain JLS).